The sequence spans 164 residues: Cell division protein SepF (164 aa).

The disordered stretch occupies residues Y21–E71. The segment covering Q22 to A49 has biased composition (low complexity).

Belongs to the SepF family. Homodimer. Interacts with FtsZ.

The protein resides in the cytoplasm. Functionally, cell division protein that is part of the divisome complex and is recruited early to the Z-ring. Probably stimulates Z-ring formation, perhaps through the cross-linking of FtsZ protofilaments. Its function overlaps with FtsA. This Clavibacter sepedonicus (Clavibacter michiganensis subsp. sepedonicus) protein is Cell division protein SepF.